Consider the following 194-residue polypeptide: Clathrin light chain (194 aa).

Residues 44-156 (TTFDNSNNNN…TDSTSGNTTH (113 aa)) are disordered. A compositionally biased stretch (low complexity) spans 48-65 (NSNNNNNNNNHNNNSYNS). Composition is skewed to basic and acidic residues over residues 89-115 (EYLE…KIAE) and 124-146 (YSER…KSLE). The tract at residues 124 to 194 (YSEREAKKKT…LIRLKNQPIV (71 aa)) is required for binding clathrin heavy chain, localization to punctae, and for cytokinesis and fruiting body development. Polar residues predominate over residues 147–156 (TDSTSGNTTH).

It belongs to the clathrin light chain family. In terms of assembly, clathrin coats are formed from molecules containing 3 heavy chains and 3 light chains.

It is found in the cytoplasmic vesicle membrane. The protein resides in the membrane. The protein localises to the coated pit. Its function is as follows. Clathrin is the major protein of the polyhedral coat of coated pits and vesicles. The sequence is that of Clathrin light chain (clc) from Dictyostelium discoideum (Social amoeba).